We begin with the raw amino-acid sequence, 104 residues long: MKKIVLLMLAIAGIAFAADEAVVNETLKAYSVVAAGIGLGLAALGGAIGMGNTAAATIAGTARNPGLGGKLMTTMFIALAMIEAQVIYALVVAMIALYANPFLG.

Helical transmembrane passes span 31-51 (SVVA…IGMG) and 75-95 (MFIA…VAMI).

The protein belongs to the ATPase C chain family. In terms of assembly, F-type ATPases have 2 components, F(1) - the catalytic core - and F(0) - the membrane proton channel. F(1) has five subunits: alpha(3), beta(3), gamma(1), delta(1), epsilon(1). F(0) has three main subunits: a(1), b(2) and c(10-14). The alpha and beta chains form an alternating ring which encloses part of the gamma chain. F(1) is attached to F(0) by a central stalk formed by the gamma and epsilon chains, while a peripheral stalk is formed by the delta and b chains.

The protein localises to the cell inner membrane. Functionally, f(1)F(0) ATP synthase produces ATP from ADP in the presence of a proton or sodium gradient. F-type ATPases consist of two structural domains, F(1) containing the extramembraneous catalytic core and F(0) containing the membrane proton channel, linked together by a central stalk and a peripheral stalk. During catalysis, ATP synthesis in the catalytic domain of F(1) is coupled via a rotary mechanism of the central stalk subunits to proton translocation. Key component of the F(0) channel; it plays a direct role in translocation across the membrane. A homomeric c-ring of between 10-14 subunits forms the central stalk rotor element with the F(1) delta and epsilon subunits. This Aliarcobacter butzleri (strain RM4018) (Arcobacter butzleri) protein is ATP synthase subunit c.